The following is a 355-amino-acid chain: UDP-N-acetylglucosamine--N-acetylmuramyl-(pentapeptide) pyrophosphoryl-undecaprenol N-acetylglucosamine transferase (355 aa).

UDP-N-acetyl-alpha-D-glucosamine contacts are provided by residues 15 to 17 (TGG), asparagine 127, arginine 163, serine 191, isoleucine 245, 264 to 269 (ALTVSE), and glutamine 289.

The protein belongs to the glycosyltransferase 28 family. MurG subfamily.

It localises to the cell inner membrane. The enzyme catalyses di-trans,octa-cis-undecaprenyl diphospho-N-acetyl-alpha-D-muramoyl-L-alanyl-D-glutamyl-meso-2,6-diaminopimeloyl-D-alanyl-D-alanine + UDP-N-acetyl-alpha-D-glucosamine = di-trans,octa-cis-undecaprenyl diphospho-[N-acetyl-alpha-D-glucosaminyl-(1-&gt;4)]-N-acetyl-alpha-D-muramoyl-L-alanyl-D-glutamyl-meso-2,6-diaminopimeloyl-D-alanyl-D-alanine + UDP + H(+). It participates in cell wall biogenesis; peptidoglycan biosynthesis. In terms of biological role, cell wall formation. Catalyzes the transfer of a GlcNAc subunit on undecaprenyl-pyrophosphoryl-MurNAc-pentapeptide (lipid intermediate I) to form undecaprenyl-pyrophosphoryl-MurNAc-(pentapeptide)GlcNAc (lipid intermediate II). In Yersinia enterocolitica serotype O:8 / biotype 1B (strain NCTC 13174 / 8081), this protein is UDP-N-acetylglucosamine--N-acetylmuramyl-(pentapeptide) pyrophosphoryl-undecaprenol N-acetylglucosamine transferase.